The primary structure comprises 234 residues: Phosphoglycolate phosphatase (234 aa).

The Nucleophile role is filled by aspartate 9. Mg(2+) contacts are provided by aspartate 9 and aspartate 11. Lysine 162 is a binding site for substrate. Mg(2+) contacts are provided by aspartate 185 and aspartate 189.

Belongs to the archaeal SPP-like hydrolase family. Mg(2+) serves as cofactor.

The catalysed reaction is 2-phosphoglycolate + H2O = glycolate + phosphate. Functionally, catalyzes the dephosphorylation of 2-phosphoglycolate. In Methanobrevibacter smithii (strain ATCC 35061 / DSM 861 / OCM 144 / PS), this protein is Phosphoglycolate phosphatase.